A 161-amino-acid chain; its full sequence is Protein-export protein SecB (161 aa).

It belongs to the SecB family. Homotetramer, a dimer of dimers. One homotetramer interacts with 1 SecA dimer.

Its subcellular location is the cytoplasm. Its function is as follows. One of the proteins required for the normal export of preproteins out of the cell cytoplasm. It is a molecular chaperone that binds to a subset of precursor proteins, maintaining them in a translocation-competent state. It also specifically binds to its receptor SecA. The chain is Protein-export protein SecB from Shewanella baltica (strain OS223).